We begin with the raw amino-acid sequence, 268 residues long: Eukaryotic translation initiation factor 3 subunit J (268 aa).

Disordered regions lie at residues 1 to 27 (MSWD…DDEF), 40 to 63 (DAEE…KVDK), and 217 to 249 (LAKV…KKDQ). A compositionally biased stretch (basic residues) spans 47–58 (QKQKPKAAPKAA). Residues 191-221 (IESIRQTVATLNVLIKEKERQERQARLAKVK) adopt a coiled-coil conformation.

The protein belongs to the eIF-3 subunit J family. In terms of assembly, component of the eukaryotic translation initiation factor 3 (eIF-3) complex.

The protein localises to the cytoplasm. Component of the eukaryotic translation initiation factor 3 (eIF-3) complex, which is involved in protein synthesis of a specialized repertoire of mRNAs and, together with other initiation factors, stimulates binding of mRNA and methionyl-tRNAi to the 40S ribosome. The eIF-3 complex specifically targets and initiates translation of a subset of mRNAs involved in cell proliferation. This chain is Eukaryotic translation initiation factor 3 subunit J, found in Eremothecium gossypii (strain ATCC 10895 / CBS 109.51 / FGSC 9923 / NRRL Y-1056) (Yeast).